We begin with the raw amino-acid sequence, 514 residues long: MDYVAQSPWIATLIVTATTYCTLRWVQYWRSWVNVPVVGRRGFLGSWISTILWTWEARGCIQKGYEKNKDFAFQVSTPNGWEVCICNDDMIKEYKNLMDDQMSALAVTSETFQAKYTLPGADWDAVHKLVPQPALAKSLMWLRNRAANDTDPYFPDFVRAFQRAFKEEIQVEQDGPFEWQSFPCFPRYSRVVAALTVKALLGSLANRPELIDLLCEYAEVIPLDGFFIALFPAILKPIVAFFCKAPRLSDRLVKVITEEIARRELENKHRIPEDMTDWMAQWVKDNPGYSIESAVVRVIATFFGGIHTTTQLTVHTLLEIATRPEYVDPLRQEITTALKAHGGWTKSAIESMTKLDSFIKEAQRFNPLDAASLARQATRDFQFSNGLKLPRGTWVFAPNGPMLFDESLYPAGSQFDGLRFWKLAEQTQRPHDYRLVTASSKYLQFGDGRHTCPGRFMAADEIRLIVAHTLFHFDIAIKNHGPRPRNTTFKKICFPDMSAEIMLRPRKLHGSEGN.

Residues 3-23 form a helical membrane-spanning segment; that stretch reads YVAQSPWIATLIVTATTYCTL. N148 carries N-linked (GlcNAc...) asparagine glycosylation. C452 is a binding site for heme. An N-linked (GlcNAc...) asparagine glycan is attached at N486.

This sequence belongs to the cytochrome P450 family. It depends on heme as a cofactor.

It is found in the membrane. The protein operates within secondary metabolite biosynthesis. Its function is as follows. Cytochrome P450 monooxygenase; part of the gene cluster that mediates the biosynthesis of the indole diterpenes penitrems. The geranylgeranyl diphosphate (GGPP) synthase ptmG catalyzes the first step in penitrem biosynthesis via conversion of farnesyl pyrophosphate and isopentyl pyrophosphate into geranylgeranyl pyrophosphate (GGPP). Condensation of indole-3-glycerol phosphate with GGPP by the prenyl transferase ptmC then forms 3-geranylgeranylindole (3-GGI). Epoxidation by the FAD-dependent monooxygenase ptmM leads to a epoxidized-GGI that is substrate of the terpene cyclase ptmB for cyclization to yield paspaline. Paspaline is subsequently converted to 13-desoxypaxilline by the cytochrome P450 monooxygenase ptmP, the latter being then converted to paxilline by the cytochrome P450 monooxygenase ptmQ. Paxilline is converted to beta-paxitriol via C-10 ketoreduction by the short-chain dehydrogenase ptmH which can be monoprenylated at the C-20 by the indole diterpene prenyltransferase ptmD. A two-step elimination (acetylation and elimination) process performed by the O-acetyltransferase ptmV and ptmI leads to the production of the prenylated form of penijanthine. The FAD-linked oxidoreductase ptmO then converts the prenylated form of penijanthine into PC-M5 which is in turn transformed into PC-M4 by the aromatic dimethylallyltransferase ptmE. Five sequential oxidative transformations performed by the cytochrome P450 monooxygenases ptmK, ptmU, ptmL, ptmN and ptmJ yield the various penitrem compounds. PtmK, ptmU and ptmM are involved in the formation of the key bicyclic ring of penitrem C via the formation of the intermediates secopenitrem D and penitrem D. PtmL catalyzes the epoxidation of penitrem D and C to yield penitrem B and F, respectively. PtmJ catalyzes the last benzylic hydroxylation to convert penitrem B to prenitrem E and penitrem F to penitrem A. The polypeptide is Cytochrome P450 monooxygenase ptmQ (Penicillium ochrochloron).